The following is a 342-amino-acid chain: Trace amine-associated receptor 3 (342 aa).

At 1-35 (MDLIYIPEDLSSCPKFGNKSCPPTNRSFRVRLIMY) the chain is on the extracellular side. Residues asparagine 18 and asparagine 25 are each glycosylated (N-linked (GlcNAc...) asparagine). Disulfide bonds link cysteine 21-cysteine 185 and cysteine 104-cysteine 189. Residues 36–56 (LLMTGAMVITIFGNLVIIISI) traverse the membrane as a helical segment. Topologically, residues 57–68 (SHFKQLHSPTNF) are cytoplasmic. A helical membrane pass occupies residues 69-89 (LILSMATTDFLLGFVIMPYSM). Topologically, residues 90 to 150 (VRSVESCWYF…TTMTASMIKR (61 aa)) are extracellular. A helical membrane pass occupies residues 151–168 (LLFFCWAAPALFSFGLVL). Residues 169–172 (SEAN) lie on the Cytoplasmic side of the membrane. Positions 173-186 (VSGMQSYEILIACF) are extracellular Loop 2 (ECL2). Residues 173–193 (VSGMQSYEILIACFNFCALTF) form a helical membrane-spanning segment. Topologically, residues 194–198 (NKFWG) are extracellular. Residues 199–223 (TILFTTCFFTPGSIMVGIYGKIFIV) traverse the membrane as a helical segment. Topologically, residues 224–256 (SRRHARALGNMPENTKGAGRNLSKKKDRKAAKT) are cytoplasmic. The helical transmembrane segment at 257–277 (LGIVMGVFLACWLPCFLAVLI) threads the bilayer. Residues 278-286 (DPYLDYSTP) lie on the Extracellular side of the membrane. The helical transmembrane segment at 287–307 (IIVLDLLVWLGYFNSTCNPLI) threads the bilayer. Topologically, residues 308–342 (HGFFYPWFRKALEHIVSGKIFRSNSDTANLFPEAH) are cytoplasmic.

The protein belongs to the G-protein coupled receptor 1 family.

The protein localises to the cell membrane. Olfactory receptor activated by several primary trace amines, including isoamylamine. Activated by isoamylamine and cyclohexylamine, but not to the corresponding alcohols, isoamylalcohol and cyclohexanol. This receptor is probably mediated by the G(s)-class of G-proteins which activate adenylate cyclase. The chain is Trace amine-associated receptor 3 (Taar3) from Rattus norvegicus (Rat).